The primary structure comprises 151 residues: MKKIDVKILDPRVGKEFPLPTYATSGSAGLDLRACLDDAVELAPGDTTLVPTGLAIHIADPSLAAMMLPRSGLGHKHGIVLGNLVGLIDSDYQGQLMISVWNRGQDSFTIQPGERIAQIIFVPVVQAEFNLVEDFDATDRGEGGFGHSGRQ.

Substrate is bound by residues 70 to 72, Asn-83, 87 to 89, and Met-97; these read RSG and LID.

It belongs to the dUTPase family. In terms of assembly, homotrimer. The cofactor is Mg(2+).

It carries out the reaction dUTP + H2O = dUMP + diphosphate + H(+). It participates in pyrimidine metabolism; dUMP biosynthesis; dUMP from dCTP (dUTP route): step 2/2. This enzyme is involved in nucleotide metabolism: it produces dUMP, the immediate precursor of thymidine nucleotides and it decreases the intracellular concentration of dUTP so that uracil cannot be incorporated into DNA. The chain is Deoxyuridine 5'-triphosphate nucleotidohydrolase from Escherichia coli O7:K1 (strain IAI39 / ExPEC).